We begin with the raw amino-acid sequence, 482 residues long: tRNA sulfurtransferase (482 aa).

The THUMP domain maps to 61 to 165 (LAIRDALTRI…DDRLLLIKGR (105 aa)). ATP-binding positions include 183 to 184 (LI), Lys265, Gly287, and Gln296. Cys344 and Cys456 form a disulfide bridge. Residues 404-482 (FGPNDVILDI…GFNNVKVYRP (79 aa)) enclose the Rhodanese domain. Cys456 acts as the Cysteine persulfide intermediate in catalysis.

It belongs to the ThiI family.

Its subcellular location is the cytoplasm. The catalysed reaction is [ThiI sulfur-carrier protein]-S-sulfanyl-L-cysteine + a uridine in tRNA + 2 reduced [2Fe-2S]-[ferredoxin] + ATP + H(+) = [ThiI sulfur-carrier protein]-L-cysteine + a 4-thiouridine in tRNA + 2 oxidized [2Fe-2S]-[ferredoxin] + AMP + diphosphate. The enzyme catalyses [ThiS sulfur-carrier protein]-C-terminal Gly-Gly-AMP + S-sulfanyl-L-cysteinyl-[cysteine desulfurase] + AH2 = [ThiS sulfur-carrier protein]-C-terminal-Gly-aminoethanethioate + L-cysteinyl-[cysteine desulfurase] + A + AMP + 2 H(+). It participates in cofactor biosynthesis; thiamine diphosphate biosynthesis. In terms of biological role, catalyzes the ATP-dependent transfer of a sulfur to tRNA to produce 4-thiouridine in position 8 of tRNAs, which functions as a near-UV photosensor. Also catalyzes the transfer of sulfur to the sulfur carrier protein ThiS, forming ThiS-thiocarboxylate. This is a step in the synthesis of thiazole, in the thiamine biosynthesis pathway. The sulfur is donated as persulfide by IscS. This chain is tRNA sulfurtransferase, found in Escherichia coli O139:H28 (strain E24377A / ETEC).